The following is a 448-amino-acid chain: Asparagine--tRNA ligase (448 aa).

Belongs to the class-II aminoacyl-tRNA synthetase family. As to quaternary structure, homodimer.

It is found in the cytoplasm. The catalysed reaction is tRNA(Asn) + L-asparagine + ATP = L-asparaginyl-tRNA(Asn) + AMP + diphosphate + H(+). The polypeptide is Asparagine--tRNA ligase (Streptococcus mutans serotype c (strain ATCC 700610 / UA159)).